We begin with the raw amino-acid sequence, 398 residues long: MSKTIAINAGSSSLKWQLYQMPEEEVLAQGIIERIGLKDSISTVKYDGKKEEQILDIHDHTEAVKILLNDLIHFGIIAAYDEITGVGHRVVAGGELFKESVVVNDKVLEQIEELSVLAPLHNPGAAAGIRAFRDILPDITSVCVFDTSFHTSMAKHTYLYPIPQKYYTDYKVRKYGAHGTSHKYVAQEAAKMLGRPLEELKLITAHIGNGVSITANYHGKSVDTSMGFTPLAGPMMGTRSGDIDPAIIPYLIEQDPELKDAADVVNMLNKKSGLSGVSGISSDMRDIEAGLQEDNPDAVLAYNIFIDRIKKCIGQYFAVLNGADALVFTAGMGENAPLMRQDVIGGLTWFGMDIDPEKNVFGYRGDISTPESKVKVLVISTDEELCIARDVERLKNTK.

Position 8 (asparagine 8) interacts with Mg(2+). ATP is bound at residue lysine 15. Position 89 (arginine 89) interacts with substrate. Aspartate 146 acts as the Proton donor/acceptor in catalysis. Residues 206 to 210 (HIGNG), 283 to 285 (DMR), and 331 to 335 (GMGEN) contribute to the ATP site. Residue glutamate 383 coordinates Mg(2+).

This sequence belongs to the acetokinase family. In terms of assembly, homodimer. Mg(2+) is required as a cofactor. Requires Mn(2+) as cofactor.

The protein localises to the cytoplasm. The catalysed reaction is acetate + ATP = acetyl phosphate + ADP. It functions in the pathway metabolic intermediate biosynthesis; acetyl-CoA biosynthesis; acetyl-CoA from acetate: step 1/2. Functionally, catalyzes the formation of acetyl phosphate from acetate and ATP. Can also catalyze the reverse reaction. In Streptococcus pyogenes serotype M12 (strain MGAS2096), this protein is Acetate kinase.